The primary structure comprises 105 residues: Synaptic plasticity regulator PANTS (105 aa).

This sequence belongs to the UPF0545 family. In terms of assembly, interacts with RTN4 isoform A/Nogo-A; the interaction results in enhanced RTN4-mediated inhibition of AMPA receptor clustering. Also interacts with NCAM1, RANBP2 and CCT8. Rapidly degraded by proteolysis following neuronal stimulation, resulting in increased AMPA receptor clustering.

Its subcellular location is the synapse. It localises to the synaptic cleft. Its function is as follows. Negatively regulates long-term potentiation and modulates adult synaptic plasticity. Stabilizes the interaction of RTN4 isoform A/Nogo-A with its receptors, inhibiting clustering of postsynaptic AMPA receptors at synaptic sites. Upon neuronal stimulation, degraded at synapses, reducing RTN4 signaling and allowing AMPA receptor clustering at individual synapses. The polypeptide is Synaptic plasticity regulator PANTS (C22orf39) (Homo sapiens (Human)).